The primary structure comprises 378 residues: MTVHTEYKRNQIIASSEIDDLIFMTKPQEWSFEEQKEIRDKLVREAFYFHYNRNEEYRNYCINQHVSDNLHTIDEIPVFPTSVFKYKKLHTVTAEDIENWYTSSGTRGVKSHIARDRLSIERLLGSVNFGMKYVGDWFEHQMELINLGPDRFNTNNIWFKYVMSLVELLYPTEFTVDNDKIDFEKTVKHLFRIKNSKKDICLIGPPFFVYLLCQYMKENNIEFKGGDRVHIITGGGWKSNQNDSLDRADFNQLLMDTFQLDKINQIRDTFNQVELNTCFFEDEFQRKHVPPWVYARALDPETLKPVADGEIGLLSYMDASSTAYPAFIVTDDIGIVKEIREPDPYPGVTVEIVRRLNTRAQKGCALSMANVIQKNIKD.

Belongs to the LuxE family.

The enzyme catalyses a long-chain fatty acid + L-cysteinyl-[protein] + ATP = an S-(long-chain fatty acyl)-L-cysteinyl-[protein] + AMP + diphosphate. The protein operates within lipid metabolism; fatty acid reduction for biolumincescence. Functionally, acyl-protein synthetase activates tetradecanoic acid. It is a component of the fatty acid reductase complex responsible for converting tetradecanoic acid to the aldehyde which serves as substrate in the luciferase-catalyzed reaction. The chain is Long-chain-fatty-acid--luciferin-component ligase from Aliivibrio fischeri (Vibrio fischeri).